An 82-amino-acid polypeptide reads, in one-letter code: RNA-binding protein GWCH70_0105 (82 aa).

This sequence belongs to the eukaryotic ribosomal protein eL8 family.

In Geobacillus sp. (strain WCH70), this protein is RNA-binding protein GWCH70_0105.